A 344-amino-acid polypeptide reads, in one-letter code: Trace amine-associated receptor 8c (344 aa).

Residues 1–36 lie on the Extracellular side of the membrane; it reads MTSNFSQATLQLCYENVNASCIKTPYSPGLRVLLYM. Residues Asn-4 and Asn-18 are each glycosylated (N-linked (GlcNAc...) asparagine). Disulfide bonds link Cys-21/Cys-185 and Cys-96/Cys-189. The helical transmembrane segment at 37–57 threads the bilayer; the sequence is VFGFGAVLAVCGNLLVVISVL. The Cytoplasmic segment spans residues 58-67; sequence HFKQLHSPAN. A helical membrane pass occupies residues 68–88; that stretch reads FLIASLASADFLVGISVMPFS. Over 89-102 the chain is Extracellular; the sequence is MVRSIESCWYFGDT. Residues 103-127 traverse the membrane as a helical segment; the sequence is FCSLHSCCDVAFCYSSALHLCFISV. The Cytoplasmic segment spans residues 128–146; the sequence is DRYIAVTDPLVYPTKFTVS. The chain crosses the membrane as a helical span at residues 147-167; the sequence is VSGICISISWILPLVYSSAVF. Topologically, residues 168–196 are extracellular; that stretch reads YTGISAMGIENLVSALNCVGGCQVVVNQD. Residues 197 to 217 traverse the membrane as a helical segment; it reads WVLISFLLFFIPTLVMIILYS. Residues 218–260 are Cytoplasmic-facing; sequence KIFLVAKQQAVKIETSVSGSKGESSLESHKARVAKRERKAAKT. The helical transmembrane segment at 261–281 threads the bilayer; that stretch reads LGVTVLAFIVSWLPYTIDTLI. Residues 282–295 lie on the Extracellular side of the membrane; it reads DAFMGFITPAYVYE. A helical membrane pass occupies residues 296 to 319; the sequence is FCCWSAYYNSAMNPLIYAFFYPWF. The Cytoplasmic segment spans residues 320–344; it reads RKAMKLILSGKILKGHSSTTSLFSE.

Belongs to the G-protein coupled receptor 1 family.

It is found in the cell membrane. Functionally, olfactory receptor activated by trace amines, such as N-methylpiperidine and N,N-dimethylcyclohexylamine. Trace amine compounds are enriched in animal body fluids and act on trace amine-associated receptors (TAARs) to elicit both intraspecific and interspecific innate behaviors. Ligand-binding causes a conformation change that triggers signaling via G(s)-class of G alpha proteins (GNAL or GNAS). This is Trace amine-associated receptor 8c from Rattus norvegicus (Rat).